The following is a 199-amino-acid chain: dTTP/UTP pyrophosphatase (199 aa).

The active-site Proton acceptor is D73.

It belongs to the Maf family. YhdE subfamily. The cofactor is a divalent metal cation.

It localises to the cytoplasm. The catalysed reaction is dTTP + H2O = dTMP + diphosphate + H(+). The enzyme catalyses UTP + H2O = UMP + diphosphate + H(+). Nucleoside triphosphate pyrophosphatase that hydrolyzes dTTP and UTP. May have a dual role in cell division arrest and in preventing the incorporation of modified nucleotides into cellular nucleic acids. The chain is dTTP/UTP pyrophosphatase from Caldicellulosiruptor saccharolyticus (strain ATCC 43494 / DSM 8903 / Tp8T 6331).